We begin with the raw amino-acid sequence, 654 residues long: MAPTQPQTKVRKPPRSWDALTPPLAQWILDYLSSMGFTQPTPVQKSCLELFRGNKDVVVEAVTGSGKTLAFLIPVVEKLLRGEEPAKRNHVQGIIISPTRELATQIYNVLVSLVKFHEPSAEAISHAKSDEKRPTATQPVVVPQLLVGGTTKAAEDLGTFLRLSPNLLIGTPGRLAELLSSAYVKAPASTFEVLIMDEADRLLDMGFANELNRILGYLPKQRRTGLFSASLSDAVERLITVGLLYPHKITVRVKSLKDGGIIQERKTPMSLQMSYLVTPASQKMPAIVQLLEKLEPRPQRSIIFFSSCMAVKYFSRILGAVLPAGFSVTSLHGKLEPKVREKNYERFVNTTSPMVLLTTDLAARGLDIPQVDLVIQHDPPTDTKVFIHRCGRAGRAGRRGLAVVLLQPGREEGYVQLLEVRQTPITPLEKPAISVTPDEVERVSAAFRSQALADREIFQMAQLAFVSWTRSYIEHQASSIFRIADLDWLDLAKGYGLLELPKMPEVREAKIDRSLGLGINTEEIPFKDKVREKKRQEELAKWKEEKAKRAQEENTGDKRKKNEAWSGKAEQEETKLQRREKKRRKREAKKFSEMTEKEKEEHLKLEQMIEEVRKRNEAKAAEERAAALAANPPKPKAPVKKVDDSDEEFGGFDD.

The Q motif motif lies at 17–45; that stretch reads WDALTPPLAQWILDYLSSMGFTQPTPVQK. Residues 48-249 enclose the Helicase ATP-binding domain; sequence LELFRGNKDV…TVGLLYPHKI (202 aa). An ATP-binding site is contributed by 61-68; it reads AVTGSGKT. The DEAD box signature appears at 197–200; the sequence is DEAD. In terms of domain architecture, Helicase C-terminal spans 286-444; that stretch reads AIVQLLEKLE…VTPDEVERVS (159 aa). Residues 531–631 are a coiled coil; the sequence is REKKRQEELA…EERAAALAAN (101 aa). The segment covering 542 to 577 has biased composition (basic and acidic residues); sequence WKEEKAKRAQEENTGDKRKKNEAWSGKAEQEETKLQ. Residues 542 to 654 form a disordered region; that stretch reads WKEEKAKRAQ…SDEEFGGFDD (113 aa). Over residues 578–588 the composition is skewed to basic residues; the sequence is RREKKRRKREA. Over residues 589 to 625 the composition is skewed to basic and acidic residues; the sequence is KKFSEMTEKEKEEHLKLEQMIEEVRKRNEAKAAEERA. The span at 644–654 shows a compositional bias: acidic residues; sequence DSDEEFGGFDD.

Belongs to the DEAD box helicase family. DDX55/SPB4 subfamily. Component of pre-60S ribosomal complexes.

It is found in the nucleus. Its subcellular location is the nucleolus. The enzyme catalyses ATP + H2O = ADP + phosphate + H(+). In terms of biological role, ATP-binding RNA helicase involved in the biogenesis of 60S ribosomal subunits. Binds 90S pre-ribosomal particles and dissociates from pre-60S ribosomal particles after processing of 27SB pre-rRNA. Required for the normal formation of 18S rRNA through the processing of pre-rRNAs at sites A0, A1 and A2, and the normal formation of 25S and 5.8S rRNAs through the processing of pre-rRNAs at sites C1 and C2. In Neurospora crassa (strain ATCC 24698 / 74-OR23-1A / CBS 708.71 / DSM 1257 / FGSC 987), this protein is ATP-dependent rRNA helicase spb-4.